Consider the following 243-residue polypeptide: Zinc import ATP-binding protein ZnuC (243 aa).

Residues 8–225 (LNLSNVSYYI…SEFQKLFGHH (218 aa)) enclose the ABC transporter domain. Residue 40 to 47 (GPNGAGKS) participates in ATP binding.

It belongs to the ABC transporter superfamily. Zinc importer (TC 3.A.1.15.5) family. The complex is composed of two ATP-binding proteins (ZnuC), two transmembrane proteins (ZnuB) and a solute-binding protein (ZnuA).

It is found in the cell inner membrane. The enzyme catalyses Zn(2+)(out) + ATP(in) + H2O(in) = Zn(2+)(in) + ADP(in) + phosphate(in) + H(+)(in). Functionally, part of the ABC transporter complex ZnuABC involved in zinc import. Responsible for energy coupling to the transport system. The protein is Zinc import ATP-binding protein ZnuC of Psychrobacter arcticus (strain DSM 17307 / VKM B-2377 / 273-4).